A 490-amino-acid polypeptide reads, in one-letter code: UDP-glucosyl transferase 73M2 (490 aa).

The active-site Proton acceptor is the His-20. The active-site Charge relay is Asp-124. UDP-binding residues include Ser-297, Trp-353, Ala-354, His-371, Asn-375, Ser-376, Glu-379, and Tyr-393.

Belongs to the UDP-glycosyltransferase family. Mainly expressed in flowers, flower buds and young leaves, and, to a lesser extent, in old leaves, stems and roots.

Its pathway is secondary metabolite biosynthesis; terpenoid biosynthesis. In terms of biological role, component of the oleanane-type triterpene saponins (e.g. saponarioside A and saponarioside B) biosynthetic pathway, leading to the production of natural products with detergent properties used as traditional sources of soap. A glycosyltransferase that mediates the conversion of QA-triFRX to QA-triFRXX via the elongation of the C-28 sugar chain with a D-xylose. The chain is UDP-glucosyl transferase 73M2 from Saponaria officinalis (Common soapwort).